The sequence spans 248 residues: UPF0280 protein Maeo_0343 (248 aa).

It belongs to the UPF0280 family.

This is UPF0280 protein Maeo_0343 from Methanococcus aeolicus (strain ATCC BAA-1280 / DSM 17508 / OCM 812 / Nankai-3).